A 234-amino-acid chain; its full sequence is Demethylmenaquinone methyltransferase (234 aa).

S-adenosyl-L-methionine is bound by residues T58, D79, and 104 to 105; that span reads NA.

It belongs to the class I-like SAM-binding methyltransferase superfamily. MenG/UbiE family.

The catalysed reaction is a 2-demethylmenaquinol + S-adenosyl-L-methionine = a menaquinol + S-adenosyl-L-homocysteine + H(+). It participates in quinol/quinone metabolism; menaquinone biosynthesis; menaquinol from 1,4-dihydroxy-2-naphthoate: step 2/2. Methyltransferase required for the conversion of demethylmenaquinol (DMKH2) to menaquinol (MKH2). This is Demethylmenaquinone methyltransferase from Lysinibacillus sphaericus (strain C3-41).